Reading from the N-terminus, the 289-residue chain is GTPase Era (289 aa).

An Era-type G domain is found at 2–167; it reads KSGFVSIIGR…LDEICKLLPE (166 aa). The G1 stretch occupies residues 10–17; that stretch reads GRTNAGKS. Residue 10-17 participates in GTP binding; it reads GRTNAGKS. Residues 36 to 40 are G2; the sequence is NATRR. A G3 region spans residues 57–60; it reads DTPG. GTP contacts are provided by residues 57–61 and 116–119; these read DTPGL and TKVD. Residues 116–119 form a G4 region; the sequence is TKVD. The tract at residues 146 to 148 is G5; that stretch reads FST. Residues 194-274 form the KH type-2 domain; the sequence is IYENLSDEIP…FLKLDVVVKK (81 aa).

The protein belongs to the TRAFAC class TrmE-Era-EngA-EngB-Septin-like GTPase superfamily. Era GTPase family. In terms of assembly, monomer.

The protein localises to the cytoplasm. It is found in the cell inner membrane. An essential GTPase that binds both GDP and GTP, with rapid nucleotide exchange. Plays a role in 16S rRNA processing and 30S ribosomal subunit biogenesis and possibly also in cell cycle regulation and energy metabolism. The polypeptide is GTPase Era (Campylobacter concisus (strain 13826)).